We begin with the raw amino-acid sequence, 356 residues long: uncharacterized protein (356 aa).

6 helical membrane passes run 2–22, 35–55, 76–96, 99–119, 124–144, and 152–172; these read IESI…FHRL, GYVT…PIPF, NMGY…FAFG, LLYG…GPFL, IVAL…LSIF, and EIAF…ITFV. In terms of domain architecture, GGDEF spans 218-353; the sequence is ESLALLLIDI…GRNQVMFNPI (136 aa).

The protein resides in the cell membrane. This is an uncharacterized protein from Staphylococcus haemolyticus (strain JCSC1435).